The primary structure comprises 920 residues: MSTNEQLAWDFDDGDVAEVRPDTGIARFAPGSEQWIAALQPTDDDAIRLDRFDVNTMTAEAAARLWARVAAWVESDQIAYYIDDSPVSSDAAYDARMRCLERLEAAFPSLDNPQSPTHRVGGSFSNDFASVRHPSRMMSLDDVFSIEELKDWYDSVIRDLDWPESKPLPMSCEVKIDGLALNLIYRNGVLEQGLTRGDGVTGEDITLNVRTIGSIPANLGGPKEDVPDFVEIRGEVFMRWDDFHTLNNEQEDAGRAPFANPRNAAAGSLRQKDPRITATRRLSFYAHGLGQLTWGPDHPRGTHDVVADQSQAYDLYTKWGVPVSPHNRAVTSFQEILDMIEYYGEHRGDIEHALDGIVVKVDDLGLQRTLGATSRAPRWAIAYKYPPEEVNTELLNITVQVGRTGRVTPVAVLKPVYVAGSTVARTTLHNGFEVKRKGILIGDTVVVRKAGDVIPELVGPVLERRKGREDQLREFVMPEFCPSCGAKLSPAKEGDKDIRCPNVESCPAQLTERVISLASRKAFDIEHLGEQSAIALTNPEENRPDSVATYAPNITEVLVAPGEEPDPYEPVEGLELPAAQKPVLSNESGLFNLTAADLRDVRVWREAAIVEVHETVGANGKKKKVRKRVGGSGLWHQVPAFWTAPTPAKKLTAKQLAERAQGEAAIESAETQGDTASETTGAPTGAEAPLGTMPGFAAASYPEYDVPADAVIVRVDHKTTRTGVTDVPVIIRPGENTRKMFDEMDKARHADLWRVLVALSIRRLGPPTARLIASAMGSLAAIENATIEDLTAIDGVGPEIAESVVNWFAATREPGDWRGATLRAWQAAGVGVDEAETSSLPQTLAGKTVVVTGSLEGYSRDSAKEAIIERGGKAAGSVSKKTDYVVIGANAGSKAAKAEELGIPMLSETQFAQLLATGTI.

Residues 90–94, 139–140, and E173 contribute to the NAD(+) site; these read DAAYD and SL. K175 acts as the N6-AMP-lysine intermediate in catalysis. Residues R196, E235, K360, and K384 each coordinate NAD(+). 4 residues coordinate Zn(2+): C481, C484, C500, and C506. The segment at 659 to 691 is disordered; sequence RAQGEAAIESAETQGDTASETTGAPTGAEAPLG. Over residues 669 to 682 the composition is skewed to polar residues; it reads AETQGDTASETTGA. One can recognise a BRCT domain in the interval 839 to 920; sequence SLPQTLAGKT…FAQLLATGTI (82 aa).

Belongs to the NAD-dependent DNA ligase family. LigA subfamily. Mg(2+) is required as a cofactor. It depends on Mn(2+) as a cofactor.

The enzyme catalyses NAD(+) + (deoxyribonucleotide)n-3'-hydroxyl + 5'-phospho-(deoxyribonucleotide)m = (deoxyribonucleotide)n+m + AMP + beta-nicotinamide D-nucleotide.. DNA ligase that catalyzes the formation of phosphodiester linkages between 5'-phosphoryl and 3'-hydroxyl groups in double-stranded DNA using NAD as a coenzyme and as the energy source for the reaction. It is essential for DNA replication and repair of damaged DNA. In Bifidobacterium longum (strain NCC 2705), this protein is DNA ligase.